The chain runs to 431 residues: Protein translocase subunit SecY (431 aa).

Helical transmembrane passes span 18–38 (IIFT…PVPH), 64–84 (LFNF…SIII), 116–136 (FTIV…NNMA), 146–166 (VGTY…LMWL), 175–195 (VGNG…PQTI), 214–234 (IIKV…VIFI), 262–282 (LPLK…AFIT), 309–329 (PVGM…YAFV), 369–389 (FVGS…VNIA), and 390–410 (GLPS…GVAL).

It belongs to the SecY/SEC61-alpha family. Component of the Sec protein translocase complex. Heterotrimer consisting of SecY, SecE and SecG subunits. The heterotrimers can form oligomers, although 1 heterotrimer is thought to be able to translocate proteins. Interacts with the ribosome. Interacts with SecDF, and other proteins may be involved. Interacts with SecA.

It is found in the cell membrane. Its function is as follows. The central subunit of the protein translocation channel SecYEG. Consists of two halves formed by TMs 1-5 and 6-10. These two domains form a lateral gate at the front which open onto the bilayer between TMs 2 and 7, and are clamped together by SecE at the back. The channel is closed by both a pore ring composed of hydrophobic SecY resides and a short helix (helix 2A) on the extracellular side of the membrane which forms a plug. The plug probably moves laterally to allow the channel to open. The ring and the pore may move independently. This chain is Protein translocase subunit SecY, found in Bacillus licheniformis (strain ATCC 14580 / DSM 13 / JCM 2505 / CCUG 7422 / NBRC 12200 / NCIMB 9375 / NCTC 10341 / NRRL NRS-1264 / Gibson 46).